We begin with the raw amino-acid sequence, 431 residues long: Glutamate--tRNA ligase 1 (431 aa).

Residues 6-16 (PSPTGDMHIGN) carry the 'HIGH' region motif. Positions 235–239 (KMSKR) match the 'KMSKS' region motif. K238 provides a ligand contact to ATP.

It belongs to the class-I aminoacyl-tRNA synthetase family. Glutamate--tRNA ligase type 1 subfamily. In terms of assembly, monomer.

The protein localises to the cytoplasm. It catalyses the reaction tRNA(Glu) + L-glutamate + ATP = L-glutamyl-tRNA(Glu) + AMP + diphosphate. Its function is as follows. Catalyzes the attachment of glutamate to tRNA(Glu) in a two-step reaction: glutamate is first activated by ATP to form Glu-AMP and then transferred to the acceptor end of tRNA(Glu). The sequence is that of Glutamate--tRNA ligase 1 from Campylobacter jejuni (strain RM1221).